The sequence spans 327 residues: tRNA uridine(34) hydroxylase (327 aa).

Residues 122 to 218 (QENRCLVLDV…YGLKMGTGKW (97 aa)) enclose the Rhodanese domain. Catalysis depends on C178, which acts as the Cysteine persulfide intermediate.

The protein belongs to the TrhO family.

The enzyme catalyses uridine(34) in tRNA + AH2 + O2 = 5-hydroxyuridine(34) in tRNA + A + H2O. In terms of biological role, catalyzes oxygen-dependent 5-hydroxyuridine (ho5U) modification at position 34 in tRNAs. The polypeptide is tRNA uridine(34) hydroxylase (Chlamydia trachomatis serovar L2 (strain ATCC VR-902B / DSM 19102 / 434/Bu)).